The sequence spans 227 residues: Orotidine 5'-phosphate decarboxylase (227 aa).

Substrate contacts are provided by residues Asp8, Lys30, Asp59 to Thr68, Thr118, Arg178, Gln187, Gly207, and Arg208. The active-site Proton donor is Lys61.

Belongs to the OMP decarboxylase family. Type 1 subfamily. Homodimer.

The enzyme catalyses orotidine 5'-phosphate + H(+) = UMP + CO2. It participates in pyrimidine metabolism; UMP biosynthesis via de novo pathway; UMP from orotate: step 2/2. In terms of biological role, catalyzes the decarboxylation of orotidine 5'-monophosphate (OMP) to uridine 5'-monophosphate (UMP). This is Orotidine 5'-phosphate decarboxylase from Helicobacter pylori (strain Shi470).